We begin with the raw amino-acid sequence, 404 residues long: MGPVLRWITAGESHGRALVAVLEGMVAGVEITSTDISEQLARRRLGYGRGARMSFERDAVSVLSGVRHGLTLGGPIAVEIGNTEWPKWETVMATDPVDPAQLADSARNAPLTRPRPGHADYAGMLKYGFDDARPVLERASARETAARVAAGTIARSFLRQALGVEVLSHVIAIGPSAPYEGPPPGPGDLPAIDASPVRAYDEAAEQAMIAEIEAAKKDGDTLGGVVEVVALGLPVGLGSFTSGDNRLDGQLAAAVMGIQAIKGVEIGDGFATARRRGSQAHDEMYPGPDGVVRSTNRAGGLEGGMTNGQPLRVRAAMKPISTVPRALATVDMATGDEAVAIHQRSDVCAVPAAGVVVEAMVALVLARATLQKFGGDSLAETRRNIDAYRRAVAEREAPAARGTA.

Residues Arg43 and Arg49 each coordinate NADP(+). Residues 138-140 (RAS), 259-260 (QA), Gly303, 318-322 (KPIST), and Arg344 each bind FMN.

This sequence belongs to the chorismate synthase family. In terms of assembly, homotetramer. It depends on FMNH2 as a cofactor.

The catalysed reaction is 5-O-(1-carboxyvinyl)-3-phosphoshikimate = chorismate + phosphate. It functions in the pathway metabolic intermediate biosynthesis; chorismate biosynthesis; chorismate from D-erythrose 4-phosphate and phosphoenolpyruvate: step 7/7. In terms of biological role, catalyzes the anti-1,4-elimination of the C-3 phosphate and the C-6 proR hydrogen from 5-enolpyruvylshikimate-3-phosphate (EPSP) to yield chorismate, which is the branch point compound that serves as the starting substrate for the three terminal pathways of aromatic amino acid biosynthesis. This reaction introduces a second double bond into the aromatic ring system. In Mycolicibacterium paratuberculosis (strain ATCC BAA-968 / K-10) (Mycobacterium paratuberculosis), this protein is Chorismate synthase.